A 950-amino-acid chain; its full sequence is Double-stranded RNA-binding protein Staufen homolog (950 aa).

Disordered regions lie at residues 25–168 (VSGA…QQQQ), 202–274 (QQQL…QPST), and 288–342 (VTPV…NTKE). Positions 31 to 43 (QQRSMMSQQRGGS) are enriched in low complexity. Polar residues predominate over residues 45–66 (AINSSKSPYQLQTSSISQFSHL). Residues 67–77 (QQQQQQQQQQQ) are compositionally biased toward low complexity. The span at 78–122 (LVNNYHKQKQMSPDITSHQFSSSTGGGMPTQNGNYQSMSGSSIHT) shows a compositional bias: polar residues. 3 stretches are compositionally biased toward low complexity: residues 130–143 (QLSL…YSSQ), 153–168 (QQHH…QQQQ), and 202–253 (QQQL…ILQH). A compositionally biased stretch (polar residues) spans 254–274 (SPTSGKSLSSAPHGTSVQPST). Basic and acidic residues predominate over residues 313 to 322 (SGRDSVHVSD). DRBM domains lie at 344–411 (TPMC…ETKC), 435–546 (TPTV…ILKN), 578–645 (SEIS…ELRK), and 690–758 (NPIS…LLGY). 2 disordered regions span residues 758-833 (YTKP…HTAS) and 922-950 (DIHP…DFSK). A compositionally biased stretch (polar residues) spans 765–782 (PTKSSFKNPSTGEAGQTN). The span at 922-937 (DIHPGGDGPQVKKDVL) shows a compositional bias: basic and acidic residues.

In terms of tissue distribution, strongly expressed in nervous tissue (at protein level).

It is found in the perikaryon. It localises to the cell projection. In terms of biological role, RNA-binding protein which is required for syntaxin location in sensory neurons during long-term synaptic facilitation. Binds to syntaxin mRNA and is required to maintain its accumulation at the axon hillock following neuronal stimulation and at the opposite pole in stable unstimulated sensory neurons. The protein is Double-stranded RNA-binding protein Staufen homolog of Aplysia californica (California sea hare).